A 1477-amino-acid polypeptide reads, in one-letter code: Lysine-specific demethylase rbr-2 (1477 aa).

The segment at 1–37 (MRARRQENSISTPSAPSTSTSPRKKASIGNSRSKNHG) is disordered. A compositionally biased stretch (low complexity) spans 9–21 (SISTPSAPSTSTS). Positions 56–97 (APIYYPTEEEFSDPIEYVAKIRHEAEKFGVVKIVPPANFKPP) constitute a JmjN domain. The ARID domain occupies 121–218 (VKEKHTFIDR…HIEPFNRNLK (98 aa)). The segment at 222–314 (MKNDDESDDE…KAEGDDDDDE (93 aa)) is disordered. A compositionally biased stretch (basic and acidic residues) spans 246-259 (MRTEIEVPNDKTTE). Basic residues-rich tracts occupy residues 272–283 (GRRRSKNKKASS) and 295–304 (NSTRGRKNKK). The segment at 319 to 371 (QVFCVACNEGKDEDLLLLCDIDGCNNGRHTYCCDPVLDEVPEGEWRCPKCIES) adopts a PHD-type 1 zinc-finger fold. The region spanning 468–634 (QYASHAWNLN…KGRECVESYS (167 aa)) is the JmjC domain. His-514, Asp-517, and His-602 together coordinate Fe cation. The stretch at 874-926 (IIDKLEKWMEQVEMWRNRAKDAIYREQEYSKEEIEKIIEEGDEYDIKLEEIDE) forms a coiled coil. A PHD-type 2 zinc finger spans residues 1203–1257 (LEACSCLGFNKSDDSESTLTCIMCDSEFHVRCCEWSPFLEKLPEGCFLCVRCLRG). The interval 1375-1404 (TAKRKRPSVSHKETSKKSRKRQSQASPSEY) is disordered. The PHD-type 3 zinc-finger motif lies at 1411–1466 (FKSCQARACLKPYGDSVNWVMCEAGCKNWFHVICLGFTLREINDMHEYRCSSCLDH).

This sequence belongs to the JARID1 histone demethylase family. Fe(2+) serves as cofactor.

The protein resides in the nucleus. The catalysed reaction is N(6),N(6),N(6)-trimethyl-L-lysyl(4)-[histone H3] + 3 2-oxoglutarate + 3 O2 = L-lysyl(4)-[histone H3] + 3 formaldehyde + 3 succinate + 3 CO2. Histone demethylase that specifically demethylates 'Lys-4' of histone H3, thereby playing a central role in histone code. Does not demethylate histone H3 'Lys-9', H3 'Lys-27', H3 'Lys-36', H3 'Lys-79' or H4 'Lys-20'. Demethylates trimethylated and dimethylated but not monomethylated H3 'Lys-4'. Required for normal longevity of the soma in a germline-dependent manner. Implicated in the epigenetic inheritance of lifespan over several generations. Involved in larval development and vulva formation. This is Lysine-specific demethylase rbr-2 (rbr-2) from Caenorhabditis elegans.